The sequence spans 186 residues: Elongation factor P (186 aa).

It belongs to the elongation factor P family.

Its subcellular location is the cytoplasm. Its pathway is protein biosynthesis; polypeptide chain elongation. Functionally, involved in peptide bond synthesis. Stimulates efficient translation and peptide-bond synthesis on native or reconstituted 70S ribosomes in vitro. Probably functions indirectly by altering the affinity of the ribosome for aminoacyl-tRNA, thus increasing their reactivity as acceptors for peptidyl transferase. The polypeptide is Elongation factor P (Streptococcus agalactiae serotype Ia (strain ATCC 27591 / A909 / CDC SS700)).